Consider the following 889-residue polypeptide: Cytoplasmic aconitate hydratase (889 aa).

Substrate is bound by residues Gln-86 and 205-207; that span reads DSH. Positions 437, 503, and 506 each coordinate [4Fe-4S] cluster. Substrate contacts are provided by residues Arg-536, Arg-541, Arg-699, and 779–780; that span reads SR.

This sequence belongs to the aconitase/IPM isomerase family. Interacts (when associated with the 4Fe-4S) with FBXL5. Interacts with frataxin(81-210). The cofactor is [4Fe-4S] cluster.

It is found in the cytoplasm. The protein resides in the cytosol. The catalysed reaction is citrate = D-threo-isocitrate. In terms of biological role, bifunctional iron sensor that switches between 2 activities depending on iron availability. Iron deprivation, promotes its mRNA binding activity through which it regulates the expression of genes involved in iron uptake, sequestration and utilization. Binds to iron-responsive elements (IRES) in the untranslated region of target mRNAs preventing for instance the translation of ferritin and aminolevulinic acid synthase and stabilizing the transferrin receptor mRNA. Functionally, conversely, when cellular iron levels are high, binds a 4Fe-4S cluster which precludes RNA binding activity and promotes the aconitase activity, the isomerization of citrate to isocitrate via cis-aconitate. This chain is Cytoplasmic aconitate hydratase (ACO1), found in Bos taurus (Bovine).